The chain runs to 569 residues: uncharacterized protein (569 aa).

Positions 1–24 are cleaved as a signal peptide; sequence MKFQRKYWGLLSTLGVSSAVALSA. A lipid anchor (N-palmitoyl cysteine) is attached at cysteine 25. Cysteine 25 carries the S-diacylglycerol cysteine lipid modification. 2 disordered regions span residues 111 to 137 and 242 to 267; these read SNMK…EWEV and GKNG…KKIE. Composition is skewed to low complexity over residues 119–130 and 249–260; these read SSSSSSTGNNGS and KKMTTDSSSTQQ.

The protein to M.pneumoniae MPN_456 and M.genitalium MG321 N-terminal region.

It localises to the cell membrane. This is an uncharacterized protein from Mycoplasma pneumoniae (strain ATCC 29342 / M129 / Subtype 1) (Mycoplasmoides pneumoniae).